A 150-amino-acid polypeptide reads, in one-letter code: PTTG1IP family member 2 (150 aa).

Positions 1–19 (MCWLRAWSHILLPVFLSVA) are cleaved as a signal peptide. Topologically, residues 20–98 (LIQLIFNLSD…SIFWANCNVD (79 aa)) are extracellular. The N-linked (GlcNAc...) asparagine glycan is linked to Asn26. The helical transmembrane segment at 99–119 (LFGIVMLILIVILALAFLWYC) threads the bilayer. Residues 120-150 (LAYYFYMQQHMALYARHGQVPVYNWDAPGDW) are Cytoplasmic-facing.

It is found in the membrane. The protein is PTTG1IP family member 2 of Mus musculus (Mouse).